Consider the following 420-residue polypeptide: 3-isopropylmalate dehydratase large subunit (420 aa).

Positions 301, 361, and 364 each coordinate [4Fe-4S] cluster.

The protein belongs to the aconitase/IPM isomerase family. LeuC type 2 subfamily. Heterodimer of LeuC and LeuD. It depends on [4Fe-4S] cluster as a cofactor.

The enzyme catalyses (2R,3S)-3-isopropylmalate = (2S)-2-isopropylmalate. The protein operates within amino-acid biosynthesis; L-leucine biosynthesis; L-leucine from 3-methyl-2-oxobutanoate: step 2/4. Its function is as follows. Catalyzes the isomerization between 2-isopropylmalate and 3-isopropylmalate, via the formation of 2-isopropylmaleate. The sequence is that of 3-isopropylmalate dehydratase large subunit from Desulfovibrio desulfuricans (strain ATCC 27774 / DSM 6949 / MB).